The chain runs to 301 residues: Ethylmalonyl-CoA decarboxylase (301 aa).

Lys-211 carries the N6-acetyllysine; alternate modification. At Lys-211 the chain carries N6-succinyllysine; alternate. Residue Lys-295 is modified to N6-succinyllysine.

Belongs to the enoyl-CoA hydratase/isomerase family.

The protein localises to the cytoplasm. It is found in the cytosol. The catalysed reaction is (2S)-ethylmalonyl-CoA + H(+) = butanoyl-CoA + CO2. It catalyses the reaction (S)-methylmalonyl-CoA + H(+) = propanoyl-CoA + CO2. It carries out the reaction (2R)-ethylmalonyl-CoA + H(+) = butanoyl-CoA + CO2. Functionally, decarboxylates ethylmalonyl-CoA, a potentially toxic metabolite, to form butyryl-CoA, suggesting it might be involved in metabolite proofreading. Acts preferentially on (S)-ethylmalonyl-CoA but also has some activity on the (R)-isomer. Also has methylmalonyl-CoA decarboxylase activity at lower level. The polypeptide is Ethylmalonyl-CoA decarboxylase (ECHDC1) (Pongo abelii (Sumatran orangutan)).